A 947-amino-acid polypeptide reads, in one-letter code: Bifunctional glutamine synthetase adenylyltransferase/adenylyl-removing enzyme (947 aa).

The adenylyl removase stretch occupies residues 1–440 (MTPLSSPLSQ…VFNELIGDDE (440 aa)). An adenylyl transferase region spans residues 450-947 (SEPWREVWQD…ASWRKWLVAV (498 aa)).

Belongs to the GlnE family. It depends on Mg(2+) as a cofactor.

It catalyses the reaction [glutamine synthetase]-O(4)-(5'-adenylyl)-L-tyrosine + phosphate = [glutamine synthetase]-L-tyrosine + ADP. The enzyme catalyses [glutamine synthetase]-L-tyrosine + ATP = [glutamine synthetase]-O(4)-(5'-adenylyl)-L-tyrosine + diphosphate. Functionally, involved in the regulation of glutamine synthetase GlnA, a key enzyme in the process to assimilate ammonia. When cellular nitrogen levels are high, the C-terminal adenylyl transferase (AT) inactivates GlnA by covalent transfer of an adenylyl group from ATP to specific tyrosine residue of GlnA, thus reducing its activity. Conversely, when nitrogen levels are low, the N-terminal adenylyl removase (AR) activates GlnA by removing the adenylyl group by phosphorolysis, increasing its activity. The regulatory region of GlnE binds the signal transduction protein PII (GlnB) which indicates the nitrogen status of the cell. The sequence is that of Bifunctional glutamine synthetase adenylyltransferase/adenylyl-removing enzyme from Salmonella paratyphi C (strain RKS4594).